We begin with the raw amino-acid sequence, 2641 residues long: Prosolanapyrone synthase (2641 aa).

The region spanning 14–440 is the Ketosynthase family 3 (KS3) domain; that stretch reads PEPIAIVGMG…GANGHCIIDD (427 aa). Catalysis depends on for beta-ketoacyl synthase activity residues C187, H323, and H363. The tract at residues 456–515 is disordered; that stretch reads SIGHINGHTNGHTNGHTNGHTNGHTNGHTNGHTNGAHASDGHNGHHQNGMNGNSASHMSE. Residues 461-490 show a composition bias toward low complexity; sequence NGHTNGHTNGHTNGHTNGHTNGHTNGHTNG. A malonyl-CoA:ACP transacylase (MAT) region spans residues 619-920; that stretch reads FVFTGQGAQW…KGPVGQISRS (302 aa). An N-terminal hotdog fold region spans residues 1011-1149; that stretch reads HDLLGSKLPG…GRVRVIAGTS (139 aa). The segment at 1011-1309 is dehydratase (DH) domain; it reads HDLLGSKLPG…GNLRCVTYTE (299 aa). Residues 1011–1313 form the PKS/mFAS DH domain; sequence HDLLGSKLPG…CVTYTEVLPS (303 aa). H1043 (proton acceptor; for dehydratase activity) is an active-site residue. The C-terminal hotdog fold stretch occupies residues 1161–1313; that stretch reads ARTLDTKAWY…CVTYTEVLPS (153 aa). D1227 functions as the Proton donor; for dehydratase activity in the catalytic mechanism. The interval 1477–1665 is methyltransferase (MT) domain; the sequence is TGAYPQLVRF…GAELVLDDYP (189 aa). The interval 1894 to 2206 is enoyl reductase (ER) domain; that stretch reads GLLTSLYFKP…KGTHVGKLVV (313 aa). Residues 2231 to 2408 form a ketoreductase (KR) domain region; it reads NYLITGGLGG…STVSFGLIRD (178 aa). The region spanning 2561–2639 is the Carrier domain; it reads RTVALVTDAI…ILANKIVDGA (79 aa). Residue S2598 is modified to O-(pantetheine 4'-phosphoryl)serine.

Its pathway is phytotoxin biosynthesis. Prosolanapyrone synthase; part of the gene cluster that mediates the biosynthesis of the phytotoxin solanapyrone, a causal agent of early blight disease of potato and tomato. The prosolanapyrone synthase sol1 is a polyketide synthase that produces the octaketide desmethylprosolanapyrone I via sequential condensations of 7 malonyl-CoA units with one acetyl-CoA unit, and one methylation step. The octaketide backbone is further methylated by the sol2 O-methyltransferase to yield prosolanapyrone I. Prosolanapyrone I is hydroxylated to prosolanapyrone II by the cytochrome P450 monooxygenase sol6. The solanapyrone synthase sol5 then catalyzes the oxidation of prosolanapyrone II and the subsequent Diels Alder cycloisomerization of the product prosolanapyrone III to solanapyrones A and D. Solanapyrones A and D are then converted into solanapyrones B and E, respectively, by the sol3 dehydrogenase. The sequence is that of Prosolanapyrone synthase (sol1) from Alternaria solani.